Here is a 998-residue protein sequence, read N- to C-terminus: Beta-galactosidase (998 aa).

Residue glutamate 431 is the Proton donor of the active site. The Nucleophile role is filled by glutamate 508.

This sequence belongs to the glycosyl hydrolase 2 family.

The catalysed reaction is Hydrolysis of terminal non-reducing beta-D-galactose residues in beta-D-galactosides.. The chain is Beta-galactosidase (lacZ) from Lactococcus lactis subsp. lactis (strain IL1403) (Streptococcus lactis).